A 427-amino-acid polypeptide reads, in one-letter code: Glutamate-1-semialdehyde 2,1-aminomutase (427 aa).

Position 267 is an N6-(pyridoxal phosphate)lysine (Lys267).

It belongs to the class-III pyridoxal-phosphate-dependent aminotransferase family. HemL subfamily. In terms of assembly, homodimer. It depends on pyridoxal 5'-phosphate as a cofactor.

It is found in the cytoplasm. The enzyme catalyses (S)-4-amino-5-oxopentanoate = 5-aminolevulinate. It functions in the pathway porphyrin-containing compound metabolism; protoporphyrin-IX biosynthesis; 5-aminolevulinate from L-glutamyl-tRNA(Glu): step 2/2. This is Glutamate-1-semialdehyde 2,1-aminomutase from Thermodesulfovibrio yellowstonii (strain ATCC 51303 / DSM 11347 / YP87).